Reading from the N-terminus, the 143-residue chain is Nucleoside diphosphate kinase (143 aa).

Residues Lys10, Phe58, Arg86, Thr92, Arg103, and Asn113 each coordinate ATP. His116 functions as the Pros-phosphohistidine intermediate in the catalytic mechanism.

This sequence belongs to the NDK family. As to quaternary structure, homotetramer. Mg(2+) serves as cofactor.

It localises to the cytoplasm. The enzyme catalyses a 2'-deoxyribonucleoside 5'-diphosphate + ATP = a 2'-deoxyribonucleoside 5'-triphosphate + ADP. The catalysed reaction is a ribonucleoside 5'-diphosphate + ATP = a ribonucleoside 5'-triphosphate + ADP. Major role in the synthesis of nucleoside triphosphates other than ATP. The ATP gamma phosphate is transferred to the NDP beta phosphate via a ping-pong mechanism, using a phosphorylated active-site intermediate. This is Nucleoside diphosphate kinase from Ehrlichia ruminantium (strain Welgevonden).